The following is a 164-amino-acid chain: Nucleotide-binding protein EF_1165 (164 aa).

The protein belongs to the YajQ family.

Its function is as follows. Nucleotide-binding protein. This Enterococcus faecalis (strain ATCC 700802 / V583) protein is Nucleotide-binding protein EF_1165.